The primary structure comprises 283 residues: Phosphatidylglycerol--prolipoprotein diacylglyceryl transferase (283 aa).

7 consecutive transmembrane segments (helical) span residues 18–38 (LGGIEVHWYGLAYACAIVVAF), 62–82 (YFLWAELGIVLGARIGYVLIY), 106–126 (FIGIRGMSYHGGLVGFLIASY), 136–156 (LLIYLDLIAISLPLGYVFGRI), 190–210 (PSQLIEAFLEGVVVFLMVMWA), 218–238 (GLLIVVYGLGYSLMRFIAEFY), and 252–272 (LSMGQILSVFMVIVSLGILLY). Arg155 is an a 1,2-diacyl-sn-glycero-3-phospho-(1'-sn-glycerol) binding site.

It belongs to the Lgt family.

The protein resides in the cell inner membrane. The catalysed reaction is L-cysteinyl-[prolipoprotein] + a 1,2-diacyl-sn-glycero-3-phospho-(1'-sn-glycerol) = an S-1,2-diacyl-sn-glyceryl-L-cysteinyl-[prolipoprotein] + sn-glycerol 1-phosphate + H(+). The protein operates within protein modification; lipoprotein biosynthesis (diacylglyceryl transfer). Catalyzes the transfer of the diacylglyceryl group from phosphatidylglycerol to the sulfhydryl group of the N-terminal cysteine of a prolipoprotein, the first step in the formation of mature lipoproteins. This chain is Phosphatidylglycerol--prolipoprotein diacylglyceryl transferase, found in Helicobacter pylori (strain J99 / ATCC 700824) (Campylobacter pylori J99).